The sequence spans 339 residues: Phosphoribosylformylglycinamidine cyclo-ligase (339 aa).

The protein belongs to the AIR synthase family.

It is found in the cytoplasm. The enzyme catalyses 2-formamido-N(1)-(5-O-phospho-beta-D-ribosyl)acetamidine + ATP = 5-amino-1-(5-phospho-beta-D-ribosyl)imidazole + ADP + phosphate + H(+). It participates in purine metabolism; IMP biosynthesis via de novo pathway; 5-amino-1-(5-phospho-D-ribosyl)imidazole from N(2)-formyl-N(1)-(5-phospho-D-ribosyl)glycinamide: step 2/2. The protein is Phosphoribosylformylglycinamidine cyclo-ligase of Methanobrevibacter smithii (strain ATCC 35061 / DSM 861 / OCM 144 / PS).